Here is a 156-residue protein sequence, read N- to C-terminus: Crossover junction endodeoxyribonuclease RuvC (156 aa).

Catalysis depends on residues aspartate 9, glutamate 69, and aspartate 141. Residues aspartate 9, glutamate 69, and aspartate 141 each coordinate Mg(2+).

Belongs to the RuvC family. In terms of assembly, homodimer which binds Holliday junction (HJ) DNA. The HJ becomes 2-fold symmetrical on binding to RuvC with unstacked arms; it has a different conformation from HJ DNA in complex with RuvA. In the full resolvosome a probable DNA-RuvA(4)-RuvB(12)-RuvC(2) complex forms which resolves the HJ. Requires Mg(2+) as cofactor.

It localises to the cytoplasm. It carries out the reaction Endonucleolytic cleavage at a junction such as a reciprocal single-stranded crossover between two homologous DNA duplexes (Holliday junction).. In terms of biological role, the RuvA-RuvB-RuvC complex processes Holliday junction (HJ) DNA during genetic recombination and DNA repair. Endonuclease that resolves HJ intermediates. Cleaves cruciform DNA by making single-stranded nicks across the HJ at symmetrical positions within the homologous arms, yielding a 5'-phosphate and a 3'-hydroxyl group; requires a central core of homology in the junction. The consensus cleavage sequence is 5'-(A/T)TT(C/G)-3'. Cleavage occurs on the 3'-side of the TT dinucleotide at the point of strand exchange. HJ branch migration catalyzed by RuvA-RuvB allows RuvC to scan DNA until it finds its consensus sequence, where it cleaves and resolves the cruciform DNA. In Acaryochloris marina (strain MBIC 11017), this protein is Crossover junction endodeoxyribonuclease RuvC.